The chain runs to 199 residues: Charged multivesicular body protein 1B1 (199 aa).

A coiled-coil region spans residues 10–48; it reads NLKFAAKELNRSSKKCDKEEKAEKAKIKKAIQKGNMEVA. The segment at 132 to 156 is interaction with IST1; that stretch reads MEDTMSSTTTLTTPQNQVDMLLQEM. Positions 167–199 are disordered; it reads ELPQGQTGSVGTSVASAEQDELSQRLARLRDQV. Polar residues predominate over residues 170 to 182; it reads QGQTGSVGTSVAS. The interaction with SPAST stretch occupies residues 174–199; that stretch reads GSVGTSVASAEQDELSQRLARLRDQV. The stretch at 178–199 forms a coiled coil; sequence TSVASAEQDELSQRLARLRDQV. Residues 180–196 are interaction with VPS4A, MITD1 and STAMBP; it reads VASAEQDELSQRLARLR. Positions 180 to 199 are interaction with VTA1; that stretch reads VASAEQDELSQRLARLRDQV. Positions 183-199 are interaction with VPS4B; the sequence is AEQDELSQRLARLRDQV. Positions 186–196 match the MIT-interacting motif motif; it reads DELSQRLARLR.

This sequence belongs to the SNF7 family. In terms of assembly, probable peripherally associated component of the endosomal sorting required for transport complex III (ESCRT-III). ESCRT-III components are thought to multimerize to form a flat lattice on the perimeter membrane of the endosome. Several assembly forms of ESCRT-III may exist that interact and act sequentially. Interacts with CHMP1A. Interacts with VTA1; the interaction probably involves the open conformation of CHMP1B. Interacts with CHMP2A. Interacts with VPS4A; the interaction is direct. Interacts with VPS4B; the interaction is direct. Interacts with SPAST (via MIT domain); the interaction is direct. Interacts with IST1. Interacts with MITD1. Interacts with STAMBP.

It localises to the cytoplasm. It is found in the cytosol. Its subcellular location is the endosome. The protein localises to the late endosome membrane. Its function is as follows. Probable peripherally associated component of the endosomal sorting required for transport complex III (ESCRT-III) which is involved in multivesicular bodies (MVBs) formation and sorting of endosomal cargo proteins into MVBs. MVBs contain intraluminal vesicles (ILVs) that are generated by invagination and scission from the limiting membrane of the endosome and mostly are delivered to lysosomes enabling degradation of membrane proteins, such as stimulated growth factor receptors, lysosomal enzymes and lipids. The MVB pathway appears to require the sequential function of ESCRT-O, -I,-II and -III complexes. ESCRT-III proteins mostly dissociate from the invaginating membrane before the ILV is released. The ESCRT machinery also functions in topologically equivalent membrane fission events, such as the terminal stages of cytokinesis. ESCRT-III proteins are believed to mediate the necessary vesicle extrusion and/or membrane fission activities, possibly in conjunction with the AAA ATPase VPS4. Involved in cytokinesis. Involved in recruiting VPS4A and/or VPS4B and SPAST to the midbody of dividing cells. This chain is Charged multivesicular body protein 1B1, found in Mus musculus (Mouse).